We begin with the raw amino-acid sequence, 1665 residues long: Cortactin-binding protein 2 (1665 aa).

Residues 120–277 (RKMQERMSTQ…EQLKRGNDSK (158 aa)) adopt a coiled-coil conformation. Disordered regions lie at residues 203 to 222 (EKKK…RRST), 368 to 480 (VSSV…SPTS), and 500 to 620 (RFTS…PSID). Composition is skewed to polar residues over residues 388–399 (SIGSTPDLASST) and 410–429 (TGQT…SMHS). Positions 455–469 (QGNANDQDQNGNTTQ) are enriched in low complexity. A compositionally biased stretch (polar residues) spans 470 to 480 (SPPSRDVSPTS). R500 carries the post-translational modification Asymmetric dimethylarginine. ANK repeat units lie at residues 711–741 (GRPT…DINY), 745–774 (DGHS…QIDA), 778–807 (NGFT…NIDH), 811–840 (GGQT…DRSV), and 844–873 (DGWT…PTLG). The disordered stretch occupies residues 875-902 (SLNEEEPEPGAFDLDQGQEGSEGTAKPV). The stretch at 914–944 (EGWTAAHIAASKGFKNCLEILCRHGGLEPER) is one ANK 6 repeat. Residues 1447 to 1495 (CSKKKGENGAWRKVSTNPRKKSGRFSSPTWSKPDLGEEGTKNKTMSQPN) are disordered. The residue at position 1526 (S1526) is a Phosphoserine. The segment at 1575–1665 (NNLRMPVSQK…KNEQVQKPNK (91 aa)) is disordered. Low complexity-rich tracts occupy residues 1590 to 1604 (SSHQ…TSKT) and 1623 to 1641 (SQCS…TRQT). The segment covering 1656–1665 (KNEQVQKPNK) has biased composition (polar residues).

As to quaternary structure, interacts with CTTN/cortactin SH3 domain. Interacts with STRN, STRN4/zinedin and MOB4/phocein; this interactions mediate the association with the STRIPAK core complex and may regulate dendritic spine distribution of the STRIPAK complex in hippocampal neurons. Activation of glutamate receptors weakens the interaction with STRN and STRN4.

Its subcellular location is the cytoplasm. The protein resides in the cell cortex. It is found in the cell projection. It localises to the dendritic spine. Functionally, regulates the dendritic spine distribution of CTTN/cortactin in hippocampal neurons, and thus controls dendritic spinogenesis and dendritic spine maintenance. Associates with the striatin-interacting phosphatase and kinase (STRIPAK) core complex to regulate dendritic spine distribution of the STRIPAK complex in hippocampal neurons. The protein is Cortactin-binding protein 2 (CTTNBP2) of Dasypus novemcinctus (Nine-banded armadillo).